We begin with the raw amino-acid sequence, 277 residues long: Thiazole synthase (277 aa).

Lysine 107 functions as the Schiff-base intermediate with DXP in the catalytic mechanism. 1-deoxy-D-xylulose 5-phosphate-binding positions include glycine 168, 194-195 (AG), and 216-217 (AS).

It belongs to the ThiG family. In terms of assembly, homotetramer. Forms heterodimers with either ThiH or ThiS.

The protein resides in the cytoplasm. The enzyme catalyses [ThiS sulfur-carrier protein]-C-terminal-Gly-aminoethanethioate + 2-iminoacetate + 1-deoxy-D-xylulose 5-phosphate = [ThiS sulfur-carrier protein]-C-terminal Gly-Gly + 2-[(2R,5Z)-2-carboxy-4-methylthiazol-5(2H)-ylidene]ethyl phosphate + 2 H2O + H(+). It functions in the pathway cofactor biosynthesis; thiamine diphosphate biosynthesis. In terms of biological role, catalyzes the rearrangement of 1-deoxy-D-xylulose 5-phosphate (DXP) to produce the thiazole phosphate moiety of thiamine. Sulfur is provided by the thiocarboxylate moiety of the carrier protein ThiS. In vitro, sulfur can be provided by H(2)S. The polypeptide is Thiazole synthase (Cutibacterium acnes (strain DSM 16379 / KPA171202) (Propionibacterium acnes)).